The following is a 132-amino-acid chain: Small ribosomal subunit protein uS8 (132 aa).

It belongs to the universal ribosomal protein uS8 family. As to quaternary structure, part of the 30S ribosomal subunit. Contacts proteins S5 and S12.

In terms of biological role, one of the primary rRNA binding proteins, it binds directly to 16S rRNA central domain where it helps coordinate assembly of the platform of the 30S subunit. The sequence is that of Small ribosomal subunit protein uS8 from Paenarthrobacter aurescens (strain TC1).